The following is a 107-amino-acid chain: MSGDKDFDKDSDVTVITRTTPQTKKPQPYKVLMLNDDYTPMEFVVLCLQRFFRMGIEDATKVMLQVHQRGVGICGVFTYEVAETKVNQVVDFARQHQHPLQCTLEKA.

Positions 1 to 12 (MSGDKDFDKDSD) are enriched in basic and acidic residues. The interval 1–21 (MSGDKDFDKDSDVTVITRTTP) is disordered.

Belongs to the ClpS family. As to quaternary structure, binds to the N-terminal domain of the chaperone ClpA.

Its function is as follows. Involved in the modulation of the specificity of the ClpAP-mediated ATP-dependent protein degradation. In Zymomonas mobilis subsp. mobilis (strain ATCC 31821 / ZM4 / CP4), this protein is ATP-dependent Clp protease adapter protein ClpS.